The sequence spans 187 residues: Peptidyl-tRNA hydrolase (187 aa).

Y18 provides a ligand contact to tRNA. The Proton acceptor role is filled by H23. Positions 65, 67, and 113 each coordinate tRNA.

This sequence belongs to the PTH family. Monomer.

It localises to the cytoplasm. It catalyses the reaction an N-acyl-L-alpha-aminoacyl-tRNA + H2O = an N-acyl-L-amino acid + a tRNA + H(+). Its function is as follows. Hydrolyzes ribosome-free peptidyl-tRNAs (with 1 or more amino acids incorporated), which drop off the ribosome during protein synthesis, or as a result of ribosome stalling. Catalyzes the release of premature peptidyl moieties from peptidyl-tRNA molecules trapped in stalled 50S ribosomal subunits, and thus maintains levels of free tRNAs and 50S ribosomes. This is Peptidyl-tRNA hydrolase from Coxiella burnetii (strain RSA 331 / Henzerling II).